Consider the following 96-residue polypeptide: MASGDLVRYVITVMLHEDTLTEINELNNYLTRDGFLLTMTDDEGNIHELGTNTFGLISTQSEEEIRELVSGLTQSATGKDPEITITTWEEWNSNRK.

This is an uncharacterized protein from Escherichia coli O157:H7.